The following is a 142-amino-acid chain: MANGKYAARKLKKDRQKHRWSDTDYARRERGLGKKSDPLEGAPQGRGIVLEKVGIEAKQPNSAIRKCVRVQLIKNGKQVTAFCPGDGAISFIDEHDEVTIAGIGGAKGRAMGDLSGVNYKVEKVNGVSLIELVRGNAEKPVR.

The interval 1–44 (MANGKYAARKLKKDRQKHRWSDTDYARRERGLGKKSDPLEGAPQ) is disordered. Residues 7–18 (AARKLKKDRQKH) are compositionally biased toward basic residues. The span at 19–38 (RWSDTDYARRERGLGKKSDP) shows a compositional bias: basic and acidic residues.

The protein belongs to the universal ribosomal protein uS12 family. In terms of assembly, part of the 30S ribosomal subunit.

In terms of biological role, with S4 and S5 plays an important role in translational accuracy. Located at the interface of the 30S and 50S subunits. This is Small ribosomal subunit protein uS12 from Haloarcula marismortui (strain ATCC 43049 / DSM 3752 / JCM 8966 / VKM B-1809) (Halobacterium marismortui).